A 314-amino-acid chain; its full sequence is Phosphoribosylaminoimidazole-succinocarboxamide synthase (314 aa).

The protein belongs to the SAICAR synthetase family.

It carries out the reaction 5-amino-1-(5-phospho-D-ribosyl)imidazole-4-carboxylate + L-aspartate + ATP = (2S)-2-[5-amino-1-(5-phospho-beta-D-ribosyl)imidazole-4-carboxamido]succinate + ADP + phosphate + 2 H(+). Its pathway is purine metabolism; IMP biosynthesis via de novo pathway; 5-amino-1-(5-phospho-D-ribosyl)imidazole-4-carboxamide from 5-amino-1-(5-phospho-D-ribosyl)imidazole-4-carboxylate: step 1/2. In Bacteroides thetaiotaomicron (strain ATCC 29148 / DSM 2079 / JCM 5827 / CCUG 10774 / NCTC 10582 / VPI-5482 / E50), this protein is Phosphoribosylaminoimidazole-succinocarboxamide synthase.